A 437-amino-acid chain; its full sequence is MVLFCLVASHRTVDLNTVARLSTGALGVAEDAVSRGALAGAITLSTCNRLELYGELPEHASVDVPGAQQQLAERIARRAGLDERFVLETMDAYEGPEVPRHLFTVVSGLESAVVGEREITGQVRRALAGAQQSGTASPHLVQLFEAAARTAREVGASTGLGERGRSIVSVALDLADDITSGDWPERHALVFGTGAYAGATMAALRDRGCADIEVYSGSGRAQQFTDQRGGSPVTDESLPGALRRADVIIGCSGGSAPMPASRFPAGPRTVVDLALARDFDPAVADLPNVELITLESVRVAAPEETRESVAAAREIVERAARDFENARTARSMDQAIVALRKHTMAVLDAELDKVRTHHGCTGAEEQIEMAMRRMVRSLLHTPTVRARQLAAEGRADEYITGLEALYGLEVAVPDVPEETAPSTRQDPSDTPRPRAVG.

Substrate is bound by residues 46 to 49 (TCNR), serine 111, 116 to 118 (ERE), and glutamine 122. The Nucleophile role is filled by cysteine 47. 192-197 (GTGAYA) provides a ligand contact to NADP(+). A disordered region spans residues 413–437 (PDVPEETAPSTRQDPSDTPRPRAVG). Positions 426-437 (DPSDTPRPRAVG) are enriched in basic and acidic residues.

Belongs to the glutamyl-tRNA reductase family. As to quaternary structure, homodimer.

The catalysed reaction is (S)-4-amino-5-oxopentanoate + tRNA(Glu) + NADP(+) = L-glutamyl-tRNA(Glu) + NADPH + H(+). Its pathway is porphyrin-containing compound metabolism; protoporphyrin-IX biosynthesis; 5-aminolevulinate from L-glutamyl-tRNA(Glu): step 1/2. Its function is as follows. Catalyzes the NADPH-dependent reduction of glutamyl-tRNA(Glu) to glutamate 1-semialdehyde (GSA). This is Glutamyl-tRNA reductase from Kocuria rhizophila (strain ATCC 9341 / DSM 348 / NBRC 103217 / DC2201).